The chain runs to 968 residues: RNA polymerase-associated protein RapA (968 aa).

Residues 164-334 (DVGRRHAPRV…FARLRLLDPN (171 aa)) form the Helicase ATP-binding domain. 177–184 (DEVGLGKT) is a binding site for ATP. Residues 280–283 (DEAH) carry the DEAH box motif. The Helicase C-terminal domain occupies 490-662 (RVEWLMGYLT…YLASPDQTEG (173 aa)).

It belongs to the SNF2/RAD54 helicase family. RapA subfamily. As to quaternary structure, interacts with the RNAP. Has a higher affinity for the core RNAP than for the holoenzyme. Its ATPase activity is stimulated by binding to RNAP.

Its function is as follows. Transcription regulator that activates transcription by stimulating RNA polymerase (RNAP) recycling in case of stress conditions such as supercoiled DNA or high salt concentrations. Probably acts by releasing the RNAP, when it is trapped or immobilized on tightly supercoiled DNA. Does not activate transcription on linear DNA. Probably not involved in DNA repair. The polypeptide is RNA polymerase-associated protein RapA (Escherichia coli (strain 55989 / EAEC)).